The following is a 147-amino-acid chain: Proteinase inhibitor type-2 (147 aa).

Residues 1-25 (MAVHKEVSFVAYLLIVLGMFLYVDA) form the signal peptide. Repeat copies occupy residues 25–81 (ALGC…DPKN) and 82–141 (PKAC…DEPK). 8 cysteine pairs are disulfide-bonded: Cys-28/Cys-116, Cys-32/Cys-112, Cys-40/Cys-122, Cys-52/Cys-89, Cys-55/Cys-73, Cys-56/Cys-85, Cys-62/Cys-98, and Cys-115/Cys-133.

It belongs to the protease inhibitor I20 (potato type II proteinase inhibitor) family.

The polypeptide is Proteinase inhibitor type-2 (Solanum tuberosum (Potato)).